A 47-amino-acid polypeptide reads, in one-letter code: Laccase-2d (47 aa).

The Plastocyanin-like domain maps to 2–47; it reads TGPVADLHIINKDLSPDGFQRPTVVAGGGRDVVSIGRAGDNVTIRF.

Belongs to the multicopper oxidase family. Homodimer. Requires Cu cation as cofactor. Post-translationally, N-glycosylated; contains 17% carbohydrates.

Its subcellular location is the secreted. It catalyses the reaction 4 hydroquinone + O2 = 4 benzosemiquinone + 2 H2O. Its activity is regulated as follows. Inhibited by sodium azide, SDS and mercaptoethanol, but not by 4-hexyl resocinol, L-cysteine and dithiothreitol. Activity is inhibited by the heavy metal ions Cr, W, Sn, Ag(+) and Hg(2+), but not by Pb(2+), Fe(3+), Ni(2+), Li(2+), Co(2+) or Cd(2+). Its function is as follows. Lignin degradation and detoxification of lignin-derived products. Has highest activity towards ABTS, also active towards ferulic acid and guaiacol, but is not active towards tyrosine, vanillic acid, 2,5-dimethyl aniline, p-anisidine or violuric acid. The sequence is that of Laccase-2d from Cerrena unicolor (Canker rot fungus).